Reading from the N-terminus, the 179-residue chain is Large ribosomal subunit protein uL6 (179 aa).

This sequence belongs to the universal ribosomal protein uL6 family. As to quaternary structure, part of the 50S ribosomal subunit.

This protein binds to the 23S rRNA, and is important in its secondary structure. It is located near the subunit interface in the base of the L7/L12 stalk, and near the tRNA binding site of the peptidyltransferase center. This Mycobacteroides abscessus (strain ATCC 19977 / DSM 44196 / CCUG 20993 / CIP 104536 / JCM 13569 / NCTC 13031 / TMC 1543 / L948) (Mycobacterium abscessus) protein is Large ribosomal subunit protein uL6.